Consider the following 103-residue polypeptide: Small ribosomal subunit protein uS10 (103 aa).

This sequence belongs to the universal ribosomal protein uS10 family. As to quaternary structure, part of the 30S ribosomal subunit.

In terms of biological role, involved in the binding of tRNA to the ribosomes. The chain is Small ribosomal subunit protein uS10 from Pelodictyon phaeoclathratiforme (strain DSM 5477 / BU-1).